A 319-amino-acid polypeptide reads, in one-letter code: Forkhead box protein E3 (319 aa).

The interval 1–69 (MAGRSDMDPP…GRRRRRPLQR (69 aa)) is disordered. A compositionally biased stretch (low complexity) spans 44–53 (AAAGRGEAAP). The fork-head DNA-binding region spans 71-165 (KPPYSYIALI…DNGSFLRRRK (95 aa)).

The protein localises to the nucleus. Transcription factor that controls lens epithelial cell growth through regulation of proliferation, apoptosis and cell cycle. During lens development, controls the ratio of the lens fiber cells to the cells of the anterior lens epithelium by regulating the rate of proliferation and differentiation. Controls lens vesicle closure and subsequent separation of the lens vesicle from ectoderm. Controls the expression of DNAJB1 in a pathway that is crucial for the development of the anterior segment of the eye. This chain is Forkhead box protein E3 (FOXE3), found in Homo sapiens (Human).